Reading from the N-terminus, the 310-residue chain is tRNA dimethylallyltransferase (310 aa).

14 to 21 (GPTASGKS) contributes to the ATP binding site. 16-21 (TASGKS) contacts substrate. Interaction with substrate tRNA regions lie at residues 39–42 (DSMQ) and 163–167 (QRIVR).

The protein belongs to the IPP transferase family. As to quaternary structure, monomer. Mg(2+) serves as cofactor.

The catalysed reaction is adenosine(37) in tRNA + dimethylallyl diphosphate = N(6)-dimethylallyladenosine(37) in tRNA + diphosphate. In terms of biological role, catalyzes the transfer of a dimethylallyl group onto the adenine at position 37 in tRNAs that read codons beginning with uridine, leading to the formation of N6-(dimethylallyl)adenosine (i(6)A). The chain is tRNA dimethylallyltransferase from Brucella abortus (strain S19).